Reading from the N-terminus, the 170-residue chain is uncharacterized protein (170 aa).

This is an uncharacterized protein from Bacillus subtilis (strain 168).